A 376-amino-acid polypeptide reads, in one-letter code: N-acetyldiaminopimelate deacetylase (376 aa).

Asp-69 is an active-site residue. Glu-128 acts as the Proton acceptor in catalysis.

It belongs to the peptidase M20A family. N-acetyldiaminopimelate deacetylase subfamily.

The catalysed reaction is N-acetyl-(2S,6S)-2,6-diaminopimelate + H2O = (2S,6S)-2,6-diaminopimelate + acetate. It participates in amino-acid biosynthesis; L-lysine biosynthesis via DAP pathway; LL-2,6-diaminopimelate from (S)-tetrahydrodipicolinate (acetylase route): step 3/3. In terms of biological role, catalyzes the conversion of N-acetyl-diaminopimelate to diaminopimelate and acetate. The polypeptide is N-acetyldiaminopimelate deacetylase (Streptococcus pneumoniae (strain 70585)).